Here is a 449-residue protein sequence, read N- to C-terminus: Glycerol-3-phosphate acyltransferase 3 (449 aa).

3 helical membrane passes run 9–29 (FVLL…PAMF), 146–166 (ISVR…CVLL), and 170–190 (ITLA…VGFL). Residues 238–243 (HTSPID) carry the HXXXXD motif motif. The helical transmembrane segment at 358–378 (MVSYILRMMTSWAIVCNVWYL) threads the bilayer.

The protein belongs to the 1-acyl-sn-glycerol-3-phosphate acyltransferase family.

It is found in the endoplasmic reticulum membrane. The enzyme catalyses sn-glycerol 3-phosphate + an acyl-CoA = a 1-acyl-sn-glycero-3-phosphate + CoA. The catalysed reaction is a 1-acyl-sn-glycero-3-phosphate + an acyl-CoA = a 1,2-diacyl-sn-glycero-3-phosphate + CoA. It catalyses the reaction dodecanoyl-CoA + sn-glycerol 3-phosphate = 1-dodecanoyl-sn-glycerol 3-phosphate + CoA. It carries out the reaction sn-glycerol 3-phosphate + hexadecanoyl-CoA = 1-hexadecanoyl-sn-glycero-3-phosphate + CoA. The enzyme catalyses sn-glycerol 3-phosphate + (9Z)-octadecenoyl-CoA = 1-(9Z-octadecenoyl)-sn-glycero-3-phosphate + CoA. The catalysed reaction is (9Z,12Z)-octadecadienoyl-CoA + sn-glycerol 3-phosphate = 1-(9Z,12Z)-octadecadienoyl-sn-glycero-3-phosphate + CoA. It catalyses the reaction 1-tetradecanoyl-sn-glycerol 3-phosphate + (9Z)-octadecenoyl-CoA = 1-tetradecanoyl-2-(9Z)-octadecenoyl-sn-glycero-3-phosphate + CoA. It carries out the reaction 1-hexadecanoyl-sn-glycero-3-phosphate + (9Z)-octadecenoyl-CoA = 1-hexadecanoyl-2-(9Z-octadecenoyl)-sn-glycero-3-phosphate + CoA. The enzyme catalyses 1-(9Z-octadecenoyl)-sn-glycero-3-phosphate + (9Z)-octadecenoyl-CoA = 1,2-di-(9Z-octadecenoyl)-sn-glycero-3-phosphate + CoA. The catalysed reaction is 1-(6Z,9Z,12Z-octadecatrienoyl)-sn-glycero-3-phosphate + (9Z)-octadecenoyl-CoA = (6Z,9Z,12Z)-octadecatrienoyl-2-(9Z)-octadecenoyl-sn-glycero-3-phosphate + CoA. It catalyses the reaction 1-(9Z,12Z,15Z)-octadecatrienoyl-sn-glycero-3-phosphate + (9Z)-octadecenoyl-CoA = 1-(9Z,12Z,15Z)-octadecatrienoyl-2-(9Z)-octadecenoyl-sn-glycero-3-phosphate + CoA. It carries out the reaction 1-(9Z-octadecenoyl)-sn-glycero-3-phosphate + tetradecanoyl-CoA = 1-(9Z)-octadecenoyl-2-tetradecanoyl-sn-glycero-3-phosphate + CoA. The enzyme catalyses 1-(9Z-octadecenoyl)-sn-glycero-3-phosphate + hexadecanoyl-CoA = 1-(9Z)-octadecenoyl-2-hexadecanoyl-sn-glycero-3-phosphate + CoA. The catalysed reaction is 1-(9Z-octadecenoyl)-sn-glycero-3-phosphate + octadecanoyl-CoA = 1-(9Z-octadecenoyl)-2-octadecanoyl-sn-glycero-3-phosphate + CoA. It catalyses the reaction 1-(9Z-octadecenoyl)-sn-glycero-3-phosphate + (9Z,12Z)-octadecadienoyl-CoA = 1-(9Z)-octadecenoyl-2-(9Z,12Z)-octadecadienoyl-sn-glycero-3-phosphate + CoA. It carries out the reaction 1-(5Z,8Z,11Z,14Z-eicosatetraenoyl)-sn-glycero-3-phosphate + (9Z)-octadecenoyl-CoA = 1-(5Z,8Z,11Z,14Z)-eicosatetraenoyl-2-(9Z)-octadecenoyl-sn-glycero-3-phosphate + CoA. Its pathway is glycerolipid metabolism; triacylglycerol biosynthesis. It functions in the pathway phospholipid metabolism; CDP-diacylglycerol biosynthesis; CDP-diacylglycerol from sn-glycerol 3-phosphate: step 1/3. Its function is as follows. Converts glycerol-3-phosphate to 1-acyl-sn-glycerol-3-phosphate (lysophosphatidic acid or LPA) by incorporating an acyl moiety at the sn-1 position of the glycerol backbone. Also converts LPA into 1,2-diacyl-sn-glycerol-3-phosphate (phosphatidic acid or PA) by incorporating an acyl moiety at the sn-2 position of the glycerol backbone. Protects cells against lipotoxicity. The chain is Glycerol-3-phosphate acyltransferase 3 from Danio rerio (Zebrafish).